The chain runs to 338 residues: Phenylalanine--tRNA ligase alpha subunit (338 aa).

Position 252 (Glu-252) interacts with Mg(2+).

It belongs to the class-II aminoacyl-tRNA synthetase family. Phe-tRNA synthetase alpha subunit type 1 subfamily. Tetramer of two alpha and two beta subunits. The cofactor is Mg(2+).

The protein localises to the cytoplasm. The enzyme catalyses tRNA(Phe) + L-phenylalanine + ATP = L-phenylalanyl-tRNA(Phe) + AMP + diphosphate + H(+). This chain is Phenylalanine--tRNA ligase alpha subunit, found in Pseudomonas putida (strain ATCC 700007 / DSM 6899 / JCM 31910 / BCRC 17059 / LMG 24140 / F1).